We begin with the raw amino-acid sequence, 1032 residues long: Leucine-rich repeat and coiled-coil domain-containing protein 1 (1032 aa).

LRR repeat units lie at residues 44–65, 66–87, 88–109, 110–131, and 136–157; these read TLHA…DHIW, NLQH…NTLT, KLCT…EELI, NLTR…IPLH, and KLRY…LQCM. The LRRCT domain occupies 175–218; that stretch reads NPVCRLPGYRAVILQTLPQLRILDCKNIFGEPVNLTEINSSQLQ. A disordered region spans residues 316-345; that stretch reads DNVLEKDPRPKRDTDITSESDYGNRKECNR. Basic and acidic residues predominate over residues 318–330; it reads VLEKDPRPKRDTD. Positions 421–647 form a coiled coil; the sequence is NTYQSLVEQL…DLENEFRIAL (227 aa).

This sequence belongs to the LRRCC1 family.

It is found in the cytoplasm. The protein localises to the cytoskeleton. The protein resides in the microtubule organizing center. Its subcellular location is the centrosome. It localises to the centriole. Required for the organization of the mitotic spindle. Maintains the structural integrity of centrosomes during mitosis. The chain is Leucine-rich repeat and coiled-coil domain-containing protein 1 (LRRCC1) from Homo sapiens (Human).